Here is a 211-residue protein sequence, read N- to C-terminus: FMN-dependent NADH:quinone oxidoreductase (211 aa).

FMN is bound by residues 17–19 and 102–105; these read SYS and MWNF.

It belongs to the azoreductase type 1 family. As to quaternary structure, homodimer. Requires FMN as cofactor.

It carries out the reaction 2 a quinone + NADH + H(+) = 2 a 1,4-benzosemiquinone + NAD(+). The catalysed reaction is N,N-dimethyl-1,4-phenylenediamine + anthranilate + 2 NAD(+) = 2-(4-dimethylaminophenyl)diazenylbenzoate + 2 NADH + 2 H(+). Its function is as follows. Quinone reductase that provides resistance to thiol-specific stress caused by electrophilic quinones. In terms of biological role, also exhibits azoreductase activity. Catalyzes the reductive cleavage of the azo bond in aromatic azo compounds to the corresponding amines. The sequence is that of FMN-dependent NADH:quinone oxidoreductase from Geobacillus kaustophilus (strain HTA426).